Reading from the N-terminus, the 131-residue chain is MVMTDPIADLLTRIRNANKARHPKVDMPSSKLKLEILKVMKQEGFIKDFSVNKDKFPKITVTLKYSDTNERVIKGLKRISKPGLRVYASIDNLPRVLNGLGVALVSTSKGILTDREARQQQIGGEVLAYVW.

This sequence belongs to the universal ribosomal protein uS8 family. Part of the 30S ribosomal subunit. Contacts proteins S5 and S12.

In terms of biological role, one of the primary rRNA binding proteins, it binds directly to 16S rRNA central domain where it helps coordinate assembly of the platform of the 30S subunit. This Acholeplasma laidlawii (strain PG-8A) protein is Small ribosomal subunit protein uS8.